We begin with the raw amino-acid sequence, 20 residues long: Putative phosphoglycerate kinase (20 aa).

This sequence belongs to the phosphoglycerate kinase family. Monomer.

It is found in the cytoplasm. The catalysed reaction is (2R)-3-phosphoglycerate + ATP = (2R)-3-phospho-glyceroyl phosphate + ADP. It participates in carbohydrate degradation; glycolysis; pyruvate from D-glyceraldehyde 3-phosphate: step 2/5. The sequence is that of Putative phosphoglycerate kinase (pgk) from Clostridium pasteurianum.